The sequence spans 71 residues: Large ribosomal subunit protein bL31 (71 aa).

Positions 16, 18, 37, and 40 each coordinate Zn(2+).

The protein belongs to the bacterial ribosomal protein bL31 family. Type A subfamily. As to quaternary structure, part of the 50S ribosomal subunit. Requires Zn(2+) as cofactor.

Binds the 23S rRNA. The chain is Large ribosomal subunit protein bL31 from Mannheimia succiniciproducens (strain KCTC 0769BP / MBEL55E).